Consider the following 115-residue polypeptide: T cell receptor beta variable 2 (115 aa).

An N-terminal signal peptide occupies residues 1–19 (MDTWLVCWAIFSLLKAGLT). In terms of domain architecture, Ig-like spans 21–115 (PEVTQTPSHQ…SAMYFCASSE (95 aa)). Residues C42 and C111 are joined by a disulfide bond. A glycan (N-linked (GlcNAc...) asparagine) is linked at N93.

As to quaternary structure, alpha-beta TR is a heterodimer composed of an alpha and beta chain; disulfide-linked. The alpha-beta TR is associated with the transmembrane signaling CD3 coreceptor proteins to form the TR-CD3 (TcR or TCR). The assembly of alpha-beta TR heterodimers with CD3 occurs in the endoplasmic reticulum where a single alpha-beta TR heterodimer associates with one CD3D-CD3E heterodimer, one CD3G-CD3E heterodimer and one CD247 homodimer forming a stable octameric structure. CD3D-CD3E and CD3G-CD3E heterodimers preferentially associate with TR alpha and TR beta chains, respectively. The association of the CD247 homodimer is the last step of TcR assembly in the endoplasmic reticulum and is required for transport to the cell surface.

The protein localises to the cell membrane. Its function is as follows. V region of the variable domain of T cell receptor (TR) beta chain that participates in the antigen recognition. Alpha-beta T cell receptors are antigen specific receptors which are essential to the immune response and are present on the cell surface of T lymphocytes. Recognize peptide-major histocompatibility (MH) (pMH) complexes that are displayed by antigen presenting cells (APC), a prerequisite for efficient T cell adaptive immunity against pathogens. Binding of alpha-beta TR to pMH complex initiates TR-CD3 clustering on the cell surface and intracellular activation of LCK that phosphorylates the ITAM motifs of CD3G, CD3D, CD3E and CD247 enabling the recruitment of ZAP70. In turn ZAP70 phosphorylates LAT, which recruits numerous signaling molecules to form the LAT signalosome. The LAT signalosome propagates signal branching to three major signaling pathways, the calcium, the mitogen-activated protein kinase (MAPK) kinase and the nuclear factor NF-kappa-B (NF-kB) pathways, leading to the mobilization of transcription factors that are critical for gene expression and essential for T cell growth and differentiation. The T cell repertoire is generated in the thymus, by V-(D)-J rearrangement. This repertoire is then shaped by intrathymic selection events to generate a peripheral T cell pool of self-MH restricted, non-autoaggressive T cells. Post-thymic interaction of alpha-beta TR with the pMH complexes shapes TR structural and functional avidity. In Homo sapiens (Human), this protein is T cell receptor beta variable 2.